The chain runs to 429 residues: Glutamate-1-semialdehyde 2,1-aminomutase 2 (429 aa).

Lysine 268 bears the N6-(pyridoxal phosphate)lysine mark.

This sequence belongs to the class-III pyridoxal-phosphate-dependent aminotransferase family. HemL subfamily. In terms of assembly, homodimer. Pyridoxal 5'-phosphate is required as a cofactor.

It is found in the cytoplasm. It catalyses the reaction (S)-4-amino-5-oxopentanoate = 5-aminolevulinate. Its pathway is porphyrin-containing compound metabolism; protoporphyrin-IX biosynthesis; 5-aminolevulinate from L-glutamyl-tRNA(Glu): step 2/2. In Bacillus mycoides (strain KBAB4) (Bacillus weihenstephanensis), this protein is Glutamate-1-semialdehyde 2,1-aminomutase 2.